We begin with the raw amino-acid sequence, 609 residues long: Proteasome-associated ATPase (609 aa).

The segment at Met1–Asp22 is disordered. Positions Ser20–Gln96 form a coiled coil. Residue Gly296–Leu301 coordinates ATP. The docks into pockets in the proteasome alpha-ring stretch occupies residues Tyr608–Leu609.

It belongs to the AAA ATPase family. As to quaternary structure, homohexamer. Assembles into a hexameric ring structure that caps the 20S proteasome core. Strongly interacts with the prokaryotic ubiquitin-like protein Pup through a hydrophobic interface; the interacting region of ARC lies in its N-terminal coiled-coil domain. There is one Pup binding site per ARC hexamer ring. Upon ATP-binding, the C-terminus of ARC interacts with the alpha-rings of the proteasome core, possibly by binding to the intersubunit pockets.

The protein operates within protein degradation; proteasomal Pup-dependent pathway. Functionally, ATPase which is responsible for recognizing, binding, unfolding and translocation of pupylated proteins into the bacterial 20S proteasome core particle. May be essential for opening the gate of the 20S proteasome via an interaction with its C-terminus, thereby allowing substrate entry and access to the site of proteolysis. Thus, the C-termini of the proteasomal ATPase may function like a 'key in a lock' to induce gate opening and therefore regulate proteolysis. This Mycobacterium leprae (strain Br4923) protein is Proteasome-associated ATPase.